Reading from the N-terminus, the 456-residue chain is Cytochrome c biogenesis protein CcsB (456 aa).

The next 3 helical transmembrane spans lie at 29 to 49, 88 to 108, and 174 to 194; these read LRLA…GTVI, AGWF…CTFR, and VGPI…IWGS.

The protein belongs to the Ccs1/CcsB family. May interact with CcsA.

Its subcellular location is the cellular thylakoid membrane. In terms of biological role, required during biogenesis of c-type cytochromes (cytochrome c6 and cytochrome f) at the step of heme attachment. This is Cytochrome c biogenesis protein CcsB from Synechococcus sp. (strain ATCC 27144 / PCC 6301 / SAUG 1402/1) (Anacystis nidulans).